Reading from the N-terminus, the 175-residue chain is CDP-archaeol synthase (175 aa).

Transmembrane regions (helical) follow at residues 41-61 (GLFS…WLSS), 82-102 (LIVV…KSFF), 122-142 (FVVG…VSNF), and 150-170 (VIII…LIGV).

The protein belongs to the CDP-archaeol synthase family. It depends on Mg(2+) as a cofactor.

It localises to the cell membrane. The enzyme catalyses 2,3-bis-O-(geranylgeranyl)-sn-glycerol 1-phosphate + CTP + H(+) = CDP-2,3-bis-O-(geranylgeranyl)-sn-glycerol + diphosphate. It functions in the pathway membrane lipid metabolism; glycerophospholipid metabolism. In terms of biological role, catalyzes the formation of CDP-2,3-bis-(O-geranylgeranyl)-sn-glycerol (CDP-archaeol) from 2,3-bis-(O-geranylgeranyl)-sn-glycerol 1-phosphate (DGGGP) and CTP. This reaction is the third ether-bond-formation step in the biosynthesis of archaeal membrane lipids. This Methanosarcina barkeri (strain Fusaro / DSM 804) protein is CDP-archaeol synthase.